The following is a 284-amino-acid chain: 2-dehydro-3-deoxyphosphooctonate aldolase (284 aa).

The protein belongs to the KdsA family.

Its subcellular location is the cytoplasm. It catalyses the reaction D-arabinose 5-phosphate + phosphoenolpyruvate + H2O = 3-deoxy-alpha-D-manno-2-octulosonate-8-phosphate + phosphate. It functions in the pathway carbohydrate biosynthesis; 3-deoxy-D-manno-octulosonate biosynthesis; 3-deoxy-D-manno-octulosonate from D-ribulose 5-phosphate: step 2/3. The protein operates within bacterial outer membrane biogenesis; lipopolysaccharide biosynthesis. The protein is 2-dehydro-3-deoxyphosphooctonate aldolase of Proteus mirabilis (strain HI4320).